Here is a 417-residue protein sequence, read N- to C-terminus: NADH-quinone oxidoreductase subunit D (417 aa).

It belongs to the complex I 49 kDa subunit family. In terms of assembly, NDH-1 is composed of 14 different subunits. Subunits NuoB, C, D, E, F, and G constitute the peripheral sector of the complex.

The protein localises to the cell inner membrane. It catalyses the reaction a quinone + NADH + 5 H(+)(in) = a quinol + NAD(+) + 4 H(+)(out). NDH-1 shuttles electrons from NADH, via FMN and iron-sulfur (Fe-S) centers, to quinones in the respiratory chain. The immediate electron acceptor for the enzyme in this species is believed to be ubiquinone. Couples the redox reaction to proton translocation (for every two electrons transferred, four hydrogen ions are translocated across the cytoplasmic membrane), and thus conserves the redox energy in a proton gradient. The sequence is that of NADH-quinone oxidoreductase subunit D from Burkholderia vietnamiensis (strain G4 / LMG 22486) (Burkholderia cepacia (strain R1808)).